The chain runs to 247 residues: Aliphatic sulfonates import ATP-binding protein SsuB 2 (247 aa).

The 215-residue stretch at Val28–Leu242 folds into the ABC transporter domain. Residue Gly60–Thr67 participates in ATP binding.

It belongs to the ABC transporter superfamily. Aliphatic sulfonates importer (TC 3.A.1.17.2) family. The complex is composed of two ATP-binding proteins (SsuB), two transmembrane proteins (SsuC) and a solute-binding protein (SsuA).

It is found in the cell inner membrane. It catalyses the reaction ATP + H2O + aliphatic sulfonate-[sulfonate-binding protein]Side 1 = ADP + phosphate + aliphatic sulfonateSide 2 + [sulfonate-binding protein]Side 1.. Functionally, part of the ABC transporter complex SsuABC involved in aliphatic sulfonates import. Responsible for energy coupling to the transport system. The chain is Aliphatic sulfonates import ATP-binding protein SsuB 2 from Paraburkholderia xenovorans (strain LB400).